The following is a 297-amino-acid chain: Glycerol-3-phosphate dehydrogenase [NAD(P)+] (297 aa).

Positions 11, 33, and 79 each coordinate NADPH. Residues Lys79, Gly107, and Ser109 each contribute to the sn-glycerol 3-phosphate site. Ala111 serves as a coordination point for NADPH. Residues Lys161, Asp214, Ser224, Arg225, and Asn226 each coordinate sn-glycerol 3-phosphate. Residue Lys161 is the Proton acceptor of the active site. NADPH is bound at residue Arg225. NADPH contacts are provided by Val249 and Glu251.

It belongs to the NAD-dependent glycerol-3-phosphate dehydrogenase family.

It localises to the cytoplasm. The enzyme catalyses sn-glycerol 3-phosphate + NAD(+) = dihydroxyacetone phosphate + NADH + H(+). The catalysed reaction is sn-glycerol 3-phosphate + NADP(+) = dihydroxyacetone phosphate + NADPH + H(+). It functions in the pathway membrane lipid metabolism; glycerophospholipid metabolism. In terms of biological role, catalyzes the reduction of the glycolytic intermediate dihydroxyacetone phosphate (DHAP) to sn-glycerol 3-phosphate (G3P), the key precursor for phospholipid synthesis. This Campylobacter jejuni subsp. jejuni serotype O:23/36 (strain 81-176) protein is Glycerol-3-phosphate dehydrogenase [NAD(P)+].